Here is a 331-residue protein sequence, read N- to C-terminus: Cathepsin 7 (331 aa).

An N-terminal signal peptide occupies residues 1-17; the sequence is MTPTVFLSILCLGVALA. The propeptide at 18–111 is activation peptide; the sequence is APAPDYNLDA…GKHIQKRNPK (94 aa). The Nuclear localization signal signature appears at 33-50; sequence KRSNDRTYSPEEEKQRRA. N-linked (GlcNAc...) asparagine glycosylation is present at N72. Intrachain disulfides connect C133–C176, C167–C209, and C267–C320. C136 is a catalytic residue. Catalysis depends on residues H274 and N298.

The protein belongs to the peptidase C1 family. Expressed in placenta. Expressed in parietal and spiral artery-associated trophoblast giant cells, most abundantly during the phase of trophoblast invasion. From 14.5 dpc onwards, expressed at lower levels in labyrinth trophoblast cells. Expressed in trophoblast stem cells. Expressed in heart, liver and testis.

Its subcellular location is the endosome. It is found in the lysosome. It localises to the cytoplasm. The protein localises to the perinuclear region. The protein resides in the golgi apparatus. Its subcellular location is the nucleus. It is found in the secreted. It localises to the extracellular space. Involved in trophoblast cell proliferation and differentiation probably by affecting mitotic cell cycle progression. Proteolytic activity and nuclear localization are essential for its role in cell cycle progression. This Mus musculus (Mouse) protein is Cathepsin 7.